Here is a 1979-residue protein sequence, read N- to C-terminus: Repetitive organellar protein (1979 aa).

The span at 1-12 (MVFTFKNKKKKK) shows a compositional bias: basic residues. Disordered stretches follow at residues 1 to 42 (MVFT…DSWY) and 54 to 116 (TKYK…NNYS). 2 stretches are compositionally biased toward basic and acidic residues: residues 13–24 (EASSDKVSKESF) and 31–42 (NNEKREKSDSWY). Residues 68–114 (EDIINNNNNNNNDNNNDNNNDNNNDNNNDNNNDNNNENNNDNNNFNN) are compositionally biased toward low complexity. 6 coiled-coil regions span residues 127 to 366 (DNEL…LKDE), 412 to 666 (LKVY…EMEL), 693 to 876 (LKES…KKKQ), 992 to 1094 (KKKH…YKTI), 1126 to 1307 (VDKI…MNIK), and 1398 to 1467 (IANY…LTSQ).

Its subcellular location is the host cell membrane. The protein is Repetitive organellar protein of Plasmodium falciparum (isolate 3D7).